We begin with the raw amino-acid sequence, 427 residues long: MTAIVDIIGREILDSRGNPTVEVDVVLEDGSVGRAAVPSGASTGAHEAVELRDGDKHRYLGKGVLKAVEAINDEIYEALSDMSVQDQVQIDQILIELDGTPNKSRIGANAILGVSLACAKAAAISYDMPLYRYVGGTSARTLPVPMMNIVNGGVHADNPIDFQEFMIMPVGAPSFAEALRCGSEIFHTLKGELKKAGHNTNVGDEGGFAPNLPSADAALDFVMSAIGKAGYNAGEDVMLALDCAATEFFRDGKYVYEGENKSRSRSEQARYLADLVARYPIVSIEDGMSEDDMDGWKELTDLIGSKCQLVGDDLFVTNVNRLADGIRNGRANSILIKVNQIGTLTETLAAVEMAYKAGYTAVMSHRSGETEDSTIADLAVATNCGQIKTGSLARADRTAKYNQLLRIEQELDAQARYAGRSALKALA.

(2R)-2-phosphoglycerate is bound at residue Q163. E205 acts as the Proton donor in catalysis. 3 residues coordinate Mg(2+): D242, E285, and D312. Positions 337, 366, 367, and 388 each coordinate (2R)-2-phosphoglycerate. The active-site Proton acceptor is K337.

Belongs to the enolase family. Mg(2+) is required as a cofactor.

The protein resides in the cytoplasm. The protein localises to the secreted. Its subcellular location is the cell surface. The enzyme catalyses (2R)-2-phosphoglycerate = phosphoenolpyruvate + H2O. The protein operates within carbohydrate degradation; glycolysis; pyruvate from D-glyceraldehyde 3-phosphate: step 4/5. In terms of biological role, catalyzes the reversible conversion of 2-phosphoglycerate (2-PG) into phosphoenolpyruvate (PEP). It is essential for the degradation of carbohydrates via glycolysis. This Bradyrhizobium sp. (strain BTAi1 / ATCC BAA-1182) protein is Enolase.